A 169-amino-acid polypeptide reads, in one-letter code: Der GTPase-activating protein YihI (169 aa).

Disordered regions lie at residues 1 to 100 and 144 to 169; these read MKPS…AELE and GLSYDDDEEEEEDEKQEDMMRLLRGN. A compositionally biased stretch (basic residues) spans 10–19; sequence SKGHAKARRK. Residues 20–30 show a composition bias toward basic and acidic residues; the sequence is TREELDQEARD. A compositionally biased stretch (basic residues) spans 31-40; the sequence is RKRQKKRRGH. Polar residues predominate over residues 49–58; sequence GNTTSGSKGQ. Positions 147–159 are enriched in acidic residues; that stretch reads YDDDEEEEEDEKQ. Over residues 160–169 the composition is skewed to basic and acidic residues; it reads EDMMRLLRGN.

It belongs to the YihI family. As to quaternary structure, interacts with Der.

Its function is as follows. A GTPase-activating protein (GAP) that modifies Der/EngA GTPase function. May play a role in ribosome biogenesis. The chain is Der GTPase-activating protein YihI from Escherichia coli O6:H1 (strain CFT073 / ATCC 700928 / UPEC).